Reading from the N-terminus, the 475-residue chain is Putative amidase AmiD (475 aa).

Active-site charge relay system residues include K93 and S166. S190 serves as the catalytic Acyl-ester intermediate.

Belongs to the amidase family.

The enzyme catalyses a monocarboxylic acid amide + H2O = a monocarboxylate + NH4(+). This is Putative amidase AmiD (amiD) from Mycobacterium bovis (strain ATCC BAA-935 / AF2122/97).